Reading from the N-terminus, the 98-residue chain is Large ribosomal subunit protein uL23 (98 aa).

The protein belongs to the universal ribosomal protein uL23 family. In terms of assembly, part of the 50S ribosomal subunit. Contacts protein L29, and trigger factor when it is bound to the ribosome.

In terms of biological role, one of the early assembly proteins it binds 23S rRNA. One of the proteins that surrounds the polypeptide exit tunnel on the outside of the ribosome. Forms the main docking site for trigger factor binding to the ribosome. The sequence is that of Large ribosomal subunit protein uL23 from Saccharophagus degradans (strain 2-40 / ATCC 43961 / DSM 17024).